The following is a 66-amino-acid chain: Movement protein TGBp3 (66 aa).

Topologically, residues 1–2 (MD) are lumenal. The helical transmembrane segment at 3–23 (FTTLIIIGVYLLVFIVYFAKI) threads the bilayer. Over 24-66 (NTSVCTISISGASIEISGCDNPTLFEILPKLRPFNHGLSLPSN) the chain is Cytoplasmic.

The protein belongs to the Tymovirales TGBp3 protein family.

The protein resides in the host endoplasmic reticulum membrane. Functionally, plays a role in viral cell-to-cell propagation, by facilitating genome transport to neighboring plant cells through plasmosdesmata. May induce the formation of granular vesicles derived from the Endoplasmic reticulum, which align on actin filaments. This chain is Movement protein TGBp3, found in Trifolium (WCMV).